The sequence spans 377 residues: Leukocyte elastase inhibitor (377 aa).

M1 is subject to N-acetylmethionine. Residue K136 is modified to N6-acetyllysine. Phosphoserine is present on S298. Residues E349 to P377 form a CARD-binding motif (CBM) region.

This sequence belongs to the serpin family. Ov-serpin subfamily. As to quaternary structure, monomer. Interacts (via C-terminus) with CASP1; CASP4 (via CARD domain) and CASP5; these interactions regulate the activity of inflammatory caspases. Interacts with PRTN3. Interacts with GZMH.

It is found in the secreted. The protein localises to the cytoplasm. It localises to the cytolytic granule. The protein resides in the early endosome. Its function is as follows. Neutrophil serine protease inhibitor that plays an essential role in the regulation of the innate immune response, inflammation and cellular homeostasis. Acts primarily to protect the cell from proteases released in the cytoplasm during stress or infection. These proteases are important in killing microbes but when released from granules, these potent enzymes also destroy host proteins and contribute to mortality. Regulates the activity of the neutrophil proteases elastase, cathepsin G, proteinase-3, chymase, chymotrypsin, and kallikrein-3. Also acts as a potent intracellular inhibitor of GZMH by directly blocking its proteolytic activity. During inflammation, limits the activity of inflammatory caspases CASP1, CASP4 and CASP5 by suppressing their caspase-recruitment domain (CARD) oligomerization and enzymatic activation. When secreted, promotes the proliferation of beta-cells via its protease inhibitory function. The chain is Leukocyte elastase inhibitor (SERPINB1) from Bos taurus (Bovine).